A 327-amino-acid chain; its full sequence is Phospho-N-acetylmuramoyl-pentapeptide-transferase (327 aa).

The next 10 membrane-spanning stretches (helical) occupy residues 3 to 23 (TAII…PAFI), 51 to 71 (TMGG…IALF), 79 to 99 (VTTI…DDFL), 115 to 135 (LFLQ…HGGG), 140 to 160 (VFGF…FWLV), 172 to 192 (IDGL…VIAL), 197 to 217 (FDLL…FGFN), 223 to 243 (IFMG…LSIA), 248 to 268 (WTLL…MLQV), and 306 to 326 (VDFL…AILY).

It belongs to the glycosyltransferase 4 family. MraY subfamily. Mg(2+) serves as cofactor.

The protein resides in the cell membrane. It catalyses the reaction UDP-N-acetyl-alpha-D-muramoyl-L-alanyl-gamma-D-glutamyl-L-lysyl-D-alanyl-D-alanine + di-trans,octa-cis-undecaprenyl phosphate = Mur2Ac(oyl-L-Ala-gamma-D-Glu-L-Lys-D-Ala-D-Ala)-di-trans,octa-cis-undecaprenyl diphosphate + UMP. Its pathway is cell wall biogenesis; peptidoglycan biosynthesis. Functionally, catalyzes the initial step of the lipid cycle reactions in the biosynthesis of the cell wall peptidoglycan: transfers peptidoglycan precursor phospho-MurNAc-pentapeptide from UDP-MurNAc-pentapeptide onto the lipid carrier undecaprenyl phosphate, yielding undecaprenyl-pyrophosphoryl-MurNAc-pentapeptide, known as lipid I. The polypeptide is Phospho-N-acetylmuramoyl-pentapeptide-transferase (Streptococcus gordonii (strain Challis / ATCC 35105 / BCRC 15272 / CH1 / DL1 / V288)).